Here is a 977-residue protein sequence, read N- to C-terminus: Myb-like protein I (977 aa).

The tract at residues 1–122 is disordered; the sequence is MMNNQSMVRY…QQQQQQLDKS (122 aa). Positions 21-39 are enriched in pro residues; it reads PSPPVYSPIYRSPPPPPQP. The span at 52 to 68 shows a compositional bias: basic and acidic residues; the sequence is DNSHHQVMDNSDHEQQQ. Positions 75 to 118 are enriched in low complexity; it reads QQQQQQQHHHQQQQQQQHHQQQQQQHHQQQQQHHHQQQQQQQQQ. The region spanning 167-222 is the HTH myb-type domain; that stretch reads EKKKQSRYWTPEEHSRFIEALSKYGHKDVKSISQYVSTRNPTQVRTHAQKYFLRID. Residues 195 to 218 constitute a DNA-binding region (H-T-H motif); sequence VKSISQYVSTRNPTQVRTHAQKYF. Disordered regions lie at residues 229–331, 422–516, 531–650, 738–853, and 872–960; these read LESK…SSPL, INNN…SSQP, NNNN…QQQM, LNSN…WPGP, and NYVP…GMNQ. Residues 241-252 show a composition bias toward acidic residues; it reads KDDDWLREEYND. Positions 254–275 are enriched in polar residues; the sequence is GSPTQYSSCSNSPTTNSVANPF. Low complexity-rich tracts occupy residues 276–329 and 422–504; these read SNSL…GNSS and INNN…INNN. The span at 505-516 shows a compositional bias: polar residues; that stretch reads GPNSPNLLSSQP. Residues 738-754 show a composition bias toward low complexity; that stretch reads LNSNSGNSSPNISSING. Residues 783-797 are compositionally biased toward polar residues; sequence LSGSPSHSPAQSPHY. Composition is skewed to low complexity over residues 798 to 848 and 887 to 943; these read NLNN…SHSI and SPHF…GSGS. Residues 944–960 show a composition bias toward polar residues; that stretch reads WHQYQATDSPTGWGMNQ.

The protein localises to the nucleus. This chain is Myb-like protein I (mybI), found in Dictyostelium discoideum (Social amoeba).